Reading from the N-terminus, the 171-residue chain is Shikimate kinase (171 aa).

14–19 is a binding site for ATP; sequence GAGKST. Position 18 (S18) interacts with Mg(2+). Substrate is bound by residues D36, R60, and G82. R120 contributes to the ATP binding site. R139 contributes to the substrate binding site. Q156 is an ATP binding site.

This sequence belongs to the shikimate kinase family. As to quaternary structure, monomer. Requires Mg(2+) as cofactor.

The protein resides in the cytoplasm. The enzyme catalyses shikimate + ATP = 3-phosphoshikimate + ADP + H(+). The protein operates within metabolic intermediate biosynthesis; chorismate biosynthesis; chorismate from D-erythrose 4-phosphate and phosphoenolpyruvate: step 5/7. Its function is as follows. Catalyzes the specific phosphorylation of the 3-hydroxyl group of shikimic acid using ATP as a cosubstrate. In Shewanella frigidimarina (strain NCIMB 400), this protein is Shikimate kinase.